We begin with the raw amino-acid sequence, 221 residues long: Endo-1,4-beta-xylanase 11A (221 aa).

The first 18 residues, 1 to 18 (MKFATVLAFATAAGAAFA), serve as a signal peptide directing secretion. In terms of domain architecture, GH11 spans 23–220 (SSETTEAGQL…GTGSASMSVS (198 aa)). Glutamate 111 functions as the Nucleophile in the catalytic mechanism. N-linked (GlcNAc...) asparagine glycosylation occurs at asparagine 117. Glutamate 207 acts as the Proton donor in catalysis.

It belongs to the glycosyl hydrolase 11 (cellulase G) family.

It localises to the secreted. The enzyme catalyses Endohydrolysis of (1-&gt;4)-beta-D-xylosidic linkages in xylans.. The protein operates within glycan degradation; xylan degradation. Functionally, endo-1,4-beta-xylanase involved in the hydrolysis of xylan, a major structural heterogeneous polysaccharide found in plant biomass representing the second most abundant polysaccharide in the biosphere, after cellulose. This Mycosarcoma maydis (Corn smut fungus) protein is Endo-1,4-beta-xylanase 11A (XYN11A).